The chain runs to 185 residues: Peptidyl-tRNA hydrolase (185 aa).

Tyr-14 provides a ligand contact to tRNA. The active-site Proton acceptor is His-19. The tRNA site is built by Tyr-64, Asn-66, and Asn-112.

Belongs to the PTH family. Monomer.

The protein localises to the cytoplasm. It carries out the reaction an N-acyl-L-alpha-aminoacyl-tRNA + H2O = an N-acyl-L-amino acid + a tRNA + H(+). Functionally, hydrolyzes ribosome-free peptidyl-tRNAs (with 1 or more amino acids incorporated), which drop off the ribosome during protein synthesis, or as a result of ribosome stalling. Its function is as follows. Catalyzes the release of premature peptidyl moieties from peptidyl-tRNA molecules trapped in stalled 50S ribosomal subunits, and thus maintains levels of free tRNAs and 50S ribosomes. This is Peptidyl-tRNA hydrolase from Lactiplantibacillus plantarum (strain ATCC BAA-793 / NCIMB 8826 / WCFS1) (Lactobacillus plantarum).